We begin with the raw amino-acid sequence, 590 residues long: Muscarinic acetylcholine receptor M3 (590 aa).

Over 1–67 the chain is Extracellular; sequence MTLHNNNTTS…DPLGGHTIWQ (67 aa). Asn6, Asn7, Asn15, Asn41, Asn48, and Asn53 each carry an N-linked (GlcNAc...) asparagine glycan. Residues 68-91 form a helical membrane-spanning segment; that stretch reads VVFIAFLTGVLALVTIIGNILVIV. Over 92–104 the chain is Cytoplasmic; that stretch reads AFKVNKQLKTVNN. Residues 105–125 traverse the membrane as a helical segment; the sequence is YFLLSLACADLIIGVISMNLF. At 126-142 the chain is on the extracellular side; it reads TTYIIMNRWALGNLACD. Cys141 and Cys221 are joined by a disulfide. Residues 143-164 traverse the membrane as a helical segment; that stretch reads LWLSIDYVASNASVMNLLVISF. The Cytoplasmic portion of the chain corresponds to 165–184; it reads DRYFSITRPLTYRAKRTTKR. The chain crosses the membrane as a helical span at residues 185–207; the sequence is AGVMIGLAWVISFILWAPAILFW. Residues 208–229 are Extracellular-facing; sequence QYFVGKRTVPPGECFIQFLSEP. A helical membrane pass occupies residues 230–252; it reads TITFGTAIAAFYMPVTIMTILYW. Topologically, residues 253 to 492 are cytoplasmic; the sequence is RIYKETEKRT…LIKEKKAAQT (240 aa). The short motif at 275–281 is the Basolateral sorting signal element; that stretch reads AEAENFV. A disordered region spans residues 324–357; sequence AEQMDQDHSSSDSWNNNDAAASLENSASSDEEDI. Over residues 334–345 the composition is skewed to low complexity; it reads SDSWNNNDAAAS. A Phosphoserine modification is found at Ser385. The segment at 398 to 419 is disordered; the sequence is SVGLERKPSKLQTQQSMDDGGS. Residues 407 to 419 are compositionally biased toward polar residues; the sequence is KLQTQQSMDDGGS. A helical membrane pass occupies residues 493–513; sequence LSAILLAFIITWTPYNIMVLV. Residues 514–527 are Extracellular-facing; that stretch reads NTFCDSCIPKTYWN. A helical transmembrane segment spans residues 528–547; that stretch reads LGYWLCYINSTVNPVCYALC. Residues 548–590 lie on the Cytoplasmic side of the membrane; the sequence is NKTFRNTFKMLLLCQCDKRKRRKQQYQQRQSVIFHKRVPEQAL.

This sequence belongs to the G-protein coupled receptor 1 family. Muscarinic acetylcholine receptor subfamily. CHRM3 sub-subfamily. Homodimer; the dimers can form tetramers. Interacts with NALCN. Interacts with TMEM147.

It is found in the cell membrane. The protein localises to the postsynaptic cell membrane. Its subcellular location is the basolateral cell membrane. The protein resides in the endoplasmic reticulum membrane. The muscarinic acetylcholine receptor mediates various cellular responses, including inhibition of adenylate cyclase, breakdown of phosphoinositides and modulation of potassium channels through the action of G proteins. Primary transducing effect is Pi turnover. This Bos taurus (Bovine) protein is Muscarinic acetylcholine receptor M3 (CHRM3).